A 326-amino-acid chain; its full sequence is Nitrogen metabolite regulation-like protein bik4 (326 aa).

Residues 13 to 18 and 161 to 164 contribute to the NADP(+) site; these read GATGEV and FASN.

Belongs to the NmrA-type oxidoreductase family.

Nitrogen metabolite regulation-like protein involved in the regulation of the gene cluster that mediates the biosynthesis of bikaverin, a red pigment also considered as a mycotoxin. This is Nitrogen metabolite regulation-like protein bik4 from Gibberella fujikuroi (strain CBS 195.34 / IMI 58289 / NRRL A-6831) (Bakanae and foot rot disease fungus).